Here is a 100-residue protein sequence, read N- to C-terminus: NADH-quinone oxidoreductase subunit K (100 aa).

3 helical membrane-spanning segments follow: residues 4–24, 29–49, and 60–80; these read YEYY…GIII, IAML…FVAF, and VFVF…LGLI.

It belongs to the complex I subunit 4L family. NDH-1 is composed of 14 different subunits. Subunits NuoA, H, J, K, L, M, N constitute the membrane sector of the complex.

It is found in the cell inner membrane. It carries out the reaction a quinone + NADH + 5 H(+)(in) = a quinol + NAD(+) + 4 H(+)(out). In terms of biological role, NDH-1 shuttles electrons from NADH, via FMN and iron-sulfur (Fe-S) centers, to quinones in the respiratory chain. The immediate electron acceptor for the enzyme in this species is believed to be ubiquinone. Couples the redox reaction to proton translocation (for every two electrons transferred, four hydrogen ions are translocated across the cytoplasmic membrane), and thus conserves the redox energy in a proton gradient. In Persephonella marina (strain DSM 14350 / EX-H1), this protein is NADH-quinone oxidoreductase subunit K.